The chain runs to 894 residues: Genome polyprotein 2 (894 aa).

In terms of domain architecture, Peptidase C6 spans 109-229 (TAEFKSGFCY…GCEYMLYPVG (121 aa)). Catalysis depends on for helper component proteinase activity residues C117 and H189. Residues 502 to 539 (WVSLDSGDEDDDHSGGGGGSPQTPGGQPPASPAPGTHQ) form a disordered region.

Belongs to the bymoviruses polyprotein 2 family. The viral RNA2 of bymoviruses is expressed as a single polyprotein which undergoes post-translational proteolytic processing resulting in the production of at least two individual proteins. The HC-pro cleaves its C-terminus autocatalytically (Potential).

The enzyme catalyses Hydrolyzes a Gly-|-Gly bond at its own C-terminus, commonly in the sequence -Tyr-Xaa-Val-Gly-|-Gly, in the processing of the potyviral polyprotein.. The sequence is that of Genome polyprotein 2 (RNA2) from Hordeum vulgare (Barley).